Here is a 261-residue protein sequence, read N- to C-terminus: Hydrolase in agr operon (261 aa).

Residues 1–239 (MKVQIYQLPI…ADILTVDLNL (239 aa)) enclose the CN hydrolase domain. Residue Glu-41 is the Proton acceptor of the active site. The active-site Proton donor is Lys-110. The Nucleophile role is filled by Cys-146.

Belongs to the carbon-nitrogen hydrolase superfamily. NIT1/NIT2 family.

The sequence is that of Hydrolase in agr operon from Staphylococcus aureus.